Reading from the N-terminus, the 126-residue chain is Large ribosomal subunit protein bL12 (126 aa).

Belongs to the bacterial ribosomal protein bL12 family. In terms of assembly, homodimer. Part of the ribosomal stalk of the 50S ribosomal subunit. Forms a multimeric L10(L12)X complex, where L10 forms an elongated spine to which 2 to 4 L12 dimers bind in a sequential fashion. Binds GTP-bound translation factors.

Its function is as follows. Forms part of the ribosomal stalk which helps the ribosome interact with GTP-bound translation factors. Is thus essential for accurate translation. This is Large ribosomal subunit protein bL12 from Koribacter versatilis (strain Ellin345).